The sequence spans 285 residues: Urease accessory protein UreD (285 aa).

This sequence belongs to the UreD family. In terms of assembly, ureD, UreF and UreG form a complex that acts as a GTP-hydrolysis-dependent molecular chaperone, activating the urease apoprotein by helping to assemble the nickel containing metallocenter of UreC. The UreE protein probably delivers the nickel.

The protein resides in the cytoplasm. Functionally, required for maturation of urease via the functional incorporation of the urease nickel metallocenter. The chain is Urease accessory protein UreD from Cytophaga hutchinsonii (strain ATCC 33406 / DSM 1761 / CIP 103989 / NBRC 15051 / NCIMB 9469 / D465).